Consider the following 330-residue polypeptide: Beta-ketoacyl-[acyl-carrier-protein] synthase III 2 (330 aa).

Residues cysteine 118 and histidine 246 contribute to the active site. An ACP-binding region spans residues 247–251 (QANLR). Asparagine 276 is a catalytic residue.

It belongs to the thiolase-like superfamily. FabH family. Homodimer.

Its subcellular location is the cytoplasm. The enzyme catalyses malonyl-[ACP] + acetyl-CoA + H(+) = 3-oxobutanoyl-[ACP] + CO2 + CoA. It participates in lipid metabolism; fatty acid biosynthesis. In terms of biological role, catalyzes the condensation reaction of fatty acid synthesis by the addition to an acyl acceptor of two carbons from malonyl-ACP. Catalyzes the first condensation reaction which initiates fatty acid synthesis and may therefore play a role in governing the total rate of fatty acid production. Possesses both acetoacetyl-ACP synthase and acetyl transacylase activities. Its substrate specificity determines the biosynthesis of branched-chain and/or straight-chain of fatty acids. In Streptomyces coelicolor (strain ATCC BAA-471 / A3(2) / M145), this protein is Beta-ketoacyl-[acyl-carrier-protein] synthase III 2.